A 434-amino-acid chain; its full sequence is Serine hydroxymethyltransferase (434 aa).

(6S)-5,6,7,8-tetrahydrofolate-binding positions include Leu-132 and 136 to 138 (GHL). Lys-241 carries the N6-(pyridoxal phosphate)lysine modification.

The protein belongs to the SHMT family. Homodimer. Pyridoxal 5'-phosphate serves as cofactor.

The protein localises to the cytoplasm. The catalysed reaction is (6R)-5,10-methylene-5,6,7,8-tetrahydrofolate + glycine + H2O = (6S)-5,6,7,8-tetrahydrofolate + L-serine. It participates in one-carbon metabolism; tetrahydrofolate interconversion. The protein operates within amino-acid biosynthesis; glycine biosynthesis; glycine from L-serine: step 1/1. In terms of biological role, catalyzes the reversible interconversion of serine and glycine with tetrahydrofolate (THF) serving as the one-carbon carrier. This reaction serves as the major source of one-carbon groups required for the biosynthesis of purines, thymidylate, methionine, and other important biomolecules. Also exhibits THF-independent aldolase activity toward beta-hydroxyamino acids, producing glycine and aldehydes, via a retro-aldol mechanism. The chain is Serine hydroxymethyltransferase from Kineococcus radiotolerans (strain ATCC BAA-149 / DSM 14245 / SRS30216).